An 84-amino-acid chain; its full sequence is Large ribosomal subunit protein bL27 (84 aa).

It belongs to the bacterial ribosomal protein bL27 family.

In Campylobacter lari (strain RM2100 / D67 / ATCC BAA-1060), this protein is Large ribosomal subunit protein bL27.